The primary structure comprises 201 residues: Ribosome maturation factor RimP (201 aa).

The tract at residues 180–201 (LRRGSAPAQDEEGEDEAPGAPL) is disordered. The segment covering 188-201 (QDEEGEDEAPGAPL) has biased composition (acidic residues).

This sequence belongs to the RimP family.

It is found in the cytoplasm. In terms of biological role, required for maturation of 30S ribosomal subunits. This chain is Ribosome maturation factor RimP, found in Methylobacterium sp. (strain 4-46).